The primary structure comprises 494 residues: Endoglucanase 1 (494 aa).

An N-terminal signal peptide occupies residues 1–25 (MDCSSPLSLFHLLLVCTVMVKCCSA). Residue D82 is the Nucleophile of the active site. N254 and N359 each carry an N-linked (GlcNAc...) asparagine glycan. Residues H411, D462, and E471 contribute to the active site.

This sequence belongs to the glycosyl hydrolase 9 (cellulase E) family.

It carries out the reaction Endohydrolysis of (1-&gt;4)-beta-D-glucosidic linkages in cellulose, lichenin and cereal beta-D-glucans.. Its function is as follows. Involved in ripening fruit process. In Persea americana (Avocado), this protein is Endoglucanase 1 (CEL1).